Reading from the N-terminus, the 411-residue chain is Squalene synthase (411 aa).

2 helical membrane passes run 281 to 301 (SIFR…AMCY) and 388 to 408 (SPVL…QLSG).

The protein belongs to the phytoene/squalene synthase family. Requires Mg(2+) as cofactor.

The protein resides in the endoplasmic reticulum membrane. It catalyses the reaction 2 (2E,6E)-farnesyl diphosphate + NADPH + H(+) = squalene + 2 diphosphate + NADP(+). It carries out the reaction 2 (2E,6E)-farnesyl diphosphate + NADH + H(+) = squalene + 2 diphosphate + NAD(+). The protein operates within terpene metabolism; lanosterol biosynthesis; lanosterol from farnesyl diphosphate: step 1/3. The protein is Squalene synthase of Nicotiana benthamiana.